Reading from the N-terminus, the 137-residue chain is Small ribosomal subunit protein uS12 (137 aa).

Residues 1 to 23 (MPTINQLVRKPRKSNATKSKSPA) form a disordered region. D102 bears the 3-methylthioaspartic acid mark.

It belongs to the universal ribosomal protein uS12 family. In terms of assembly, part of the 30S ribosomal subunit. Contacts proteins S8 and S17. May interact with IF1 in the 30S initiation complex.

With S4 and S5 plays an important role in translational accuracy. Its function is as follows. Interacts with and stabilizes bases of the 16S rRNA that are involved in tRNA selection in the A site and with the mRNA backbone. Located at the interface of the 30S and 50S subunits, it traverses the body of the 30S subunit contacting proteins on the other side and probably holding the rRNA structure together. The combined cluster of proteins S8, S12 and S17 appears to hold together the shoulder and platform of the 30S subunit. The polypeptide is Small ribosomal subunit protein uS12 (Leuconostoc citreum (strain KM20)).